A 759-amino-acid chain; its full sequence is LIM domain and actin-binding protein 1 (759 aa).

M1 carries the post-translational modification N-acetylmethionine. Phosphoserine is present on residues S4, S15, and S55. Residues 78–131 (NPGLGAESHTDSLRNSSTEIRHRADHPPAEVTSHAASGAKADQEEQIHPRSRLR) form a disordered region. Over residues 96-105 (EIRHRADHPP) the composition is skewed to basic and acidic residues. The residue at position 132 (S132) is a Phosphoserine. Residues 146–177 (KDGEDLKDHSTESKKMENCLGESRHEVEKSEI) show a composition bias toward basic and acidic residues. The disordered stretch occupies residues 146 to 182 (KDGEDLKDHSTESKKMENCLGESRHEVEKSEISENTD). Positions 164 to 166 (CLG) match the Required for interaction with NPC1L1 motif. A phosphoserine mark is found at A183 and S225. Disordered regions lie at residues 211–264 (ILRA…RLSE) and 323–381 (EKIS…AMKK). Y229 is subject to Phosphotyrosine. 2 positions are modified to phosphoserine: S230 and S242. The span at 247–258 (DSEKNESRRNLE) shows a compositional bias: basic and acidic residues. Residues S263, S343, S350, S362, S365, S369, and S374 each carry the phosphoserine modification. The span at 362–376 (SPDSRASSLSESSPP) shows a compositional bias: low complexity. The 61-residue stretch at 388 to 448 (ETCVECQKTV…KPHFNQLFKS (61 aa)) folds into the LIM zinc-binding domain. K439 carries the post-translational modification N6-succinyllysine. Phosphoserine is present on S490. Positions 493 to 513 (VEDAPIAKVGVLAASMEAKAS) are required for interaction with MYO5B. The segment at 509-709 (EAKASSQQEK…QEPKSLNWSS (201 aa)) is disordered. 2 stretches are compositionally biased toward basic and acidic residues: residues 516–527 (QEKEDKPAETKK) and 556–567 (WPPEDEISKPEV). Polar residues predominate over residues 595–607 (ASFQSTSVKSPKT). A phosphoserine mark is found at S601, S604, S609, and S617. Positions 644-655 (KNGNVGKTTWQN) are enriched in polar residues. A compositionally biased stretch (basic and acidic residues) spans 656 to 673 (KESKGETGKRSKEGHSLE). A compositionally biased stretch (acidic residues) spans 674-691 (MENENLVENGADSDEDDN). Phosphoserine occurs at positions 686, 692, 698, 726, and 741. The span at 693-709 (FLKQQSPQEPKSLNWSS) shows a compositional bias: polar residues.

In terms of assembly, interacts with NPC1L1; bridges NPC1L1 with MYO5B. Interacts with MYO5B; bridges NPC1L1 with MYO5B. Interacts with PXN; this complex stabilizes actin dynamics. Interacts with F-actin and G-actin. Interacts with LUZP1 (via C-terminus); both proteins restrict ciliation and may work together to regulate this process. Binds RAB40B (GTP-bound); interaction influences LIMA1 subcellular localization in lamellipodia during cell migration. Post-translationally, ubiquitinated by the ECS(RAB40B) complex leading to its degradation. In terms of processing, phosphorylation of the C-terminal region by MAPK1/MAPK3 reduces its association with F-actin and contributes to actin filament reorganization and enhances cell motility. Highly expressed in placenta, kidney, pancreas, prostate, ovary, spleen and heart. Also detected in lung, liver, brain, skeletal muscle, thymus, testis and intestine. Not detected in leukocytes. Isoform Beta expressed generally at very low levels. Isoform Alpha abundant in epithelial cells from mammary gland, prostate and in normal oral keratinocytes. Low levels in aortic endothelial cells and dermal fibroblasts. Not detectable in myocardium.

It is found in the cytoplasm. Its subcellular location is the cell junction. The protein resides in the focal adhesion. It localises to the cytoskeleton. The protein localises to the stress fiber. It is found in the cell membrane. Its subcellular location is the cell projection. The protein resides in the ruffle. It localises to the lamellipodium. Functionally, actin-binding protein involved in actin cytoskeleton regulation and dynamics. Increases the number and size of actin stress fibers and inhibits membrane ruffling. Inhibits actin filament depolymerization. Bundles actin filaments, delays filament nucleation and reduces formation of branched filaments. Acts as a negative regulator of primary cilium formation. Plays a role in cholesterol homeostasis. Influences plasma cholesterol levels through regulation of intestinal cholesterol absorption. May act as a scaffold protein by regulating NPC1L1 transportation, an essential protein for cholesterol absorption, to the plasma membrane by recruiting MYO5B to NPC1L1, and thus facilitates cholesterol uptake. This is LIM domain and actin-binding protein 1 from Homo sapiens (Human).